A 244-amino-acid polypeptide reads, in one-letter code: Methylthioribulose-1-phosphate dehydratase (244 aa).

Position 89 (cysteine 89) interacts with substrate. Zn(2+)-binding residues include histidine 107 and histidine 109. Residue glutamate 130 is the Proton donor/acceptor of the active site. Histidine 192 lines the Zn(2+) pocket.

It belongs to the aldolase class II family. MtnB subfamily. Zn(2+) is required as a cofactor.

The protein localises to the cytoplasm. The catalysed reaction is 5-(methylsulfanyl)-D-ribulose 1-phosphate = 5-methylsulfanyl-2,3-dioxopentyl phosphate + H2O. It participates in amino-acid biosynthesis; L-methionine biosynthesis via salvage pathway; L-methionine from S-methyl-5-thio-alpha-D-ribose 1-phosphate: step 2/6. In terms of biological role, catalyzes the dehydration of methylthioribulose-1-phosphate (MTRu-1-P) into 2,3-diketo-5-methylthiopentyl-1-phosphate (DK-MTP-1-P). In Saccharomyces cerevisiae (strain ATCC 204508 / S288c) (Baker's yeast), this protein is Methylthioribulose-1-phosphate dehydratase.